A 401-amino-acid chain; its full sequence is Bifunctional D-cysteine desulfhydrase/1-aminocyclopropane-1-carboxylate deaminase, mitochondrial (401 aa).

Residues 1 to 37 constitute a mitochondrion transit peptide; sequence MRGRSLTLSRVKLELARRSMSATSVPSMADFLTKKPY. Arg-2 carries the N-acetylserine modification. Position 93 is an N6-(pyridoxal phosphate)lysine (Lys-93). Ser-120 functions as the Nucleophile in the catalytic mechanism.

Belongs to the ACC deaminase/D-cysteine desulfhydrase family. Pyridoxal 5'-phosphate is required as a cofactor. Highly expressed in stems and cauline leaves, and at lower levels in roots, rosette leaves and flowers.

It localises to the mitochondrion. The catalysed reaction is D-cysteine + H2O = hydrogen sulfide + pyruvate + NH4(+) + H(+). The enzyme catalyses 1-aminocyclopropane-1-carboxylate + H2O = 2-oxobutanoate + NH4(+). Catalyzes the production of hydrogen sulfide (H2S) from cysteine. Is mainly responsible for the degradation of cysteine to generate H2S, a regulator of stomatal movement and closure. Has high affinity for D-cysteine. In terms of biological role, possesses 1-aminocyclopropane-1-carboxylic acid (ACC) deaminase activity. Acts as a regulator of ACC levels and causes changes in ethylene levels. The chain is Bifunctional D-cysteine desulfhydrase/1-aminocyclopropane-1-carboxylate deaminase, mitochondrial (DCD) from Arabidopsis thaliana (Mouse-ear cress).